A 555-amino-acid polypeptide reads, in one-letter code: Formate--tetrahydrofolate ligase (555 aa).

Position 65 to 72 (65 to 72) interacts with ATP; sequence TPAGEGKS.

This sequence belongs to the formate--tetrahydrofolate ligase family.

The catalysed reaction is (6S)-5,6,7,8-tetrahydrofolate + formate + ATP = (6R)-10-formyltetrahydrofolate + ADP + phosphate. It participates in one-carbon metabolism; tetrahydrofolate interconversion. The chain is Formate--tetrahydrofolate ligase from Staphylococcus aureus (strain NCTC 8325 / PS 47).